We begin with the raw amino-acid sequence, 665 residues long: Beta-galactosidase LacZ (665 aa).

R110 contacts substrate. Residue C114 participates in Zn(2+) binding. Residue N148 coordinates substrate. Residue E149 is the Proton donor of the active site. Residues C157, C159, and C162 each contribute to the Zn(2+) site. The active-site Nucleophile is the E303. Residues W311 and 351-354 each bind substrate; that span reads EKFH.

This sequence belongs to the glycosyl hydrolase 42 family.

It carries out the reaction Hydrolysis of terminal non-reducing beta-D-galactose residues in beta-D-galactosides.. The sequence is that of Beta-galactosidase LacZ from Heyndrickxia coagulans (Weizmannia coagulans).